The sequence spans 295 residues: MIKYYNRRNKDYDIEKVAGEKYLNWTYSSPIGMNLLEVFIKKKFFSKIYGFYCNKRLSRKKINKFINDFGIDMSLSENQSSNFKCFNDFFTRKLKKEARPVKADKNLLISPGDGKILAYKNLNLNSVTEVKGINYSFYELINNDSLAKEYDNGTCLVLRLCPTDYHRFHFIDNGICENTIKLKGFYYSVNPIALSKIPSVFCKNKREYSIFHSENFGDIIFMEVGATCVGSIIQTYKPNTKILKGDEKGYFKFGGSTVILFFKKNTIKIDNDILSQSKLGYETSVIMGEPIGSRK.

Residues D113, H169, and S256 each act as charge relay system; for autoendoproteolytic cleavage activity in the active site. S256 serves as the catalytic Schiff-base intermediate with substrate; via pyruvic acid; for decarboxylase activity. A Pyruvic acid (Ser); by autocatalysis modification is found at S256.

It belongs to the phosphatidylserine decarboxylase family. PSD-B subfamily. Prokaryotic type II sub-subfamily. Heterodimer of a large membrane-associated beta subunit and a small pyruvoyl-containing alpha subunit. It depends on pyruvate as a cofactor. In terms of processing, is synthesized initially as an inactive proenzyme. Formation of the active enzyme involves a self-maturation process in which the active site pyruvoyl group is generated from an internal serine residue via an autocatalytic post-translational modification. Two non-identical subunits are generated from the proenzyme in this reaction, and the pyruvate is formed at the N-terminus of the alpha chain, which is derived from the carboxyl end of the proenzyme. The autoendoproteolytic cleavage occurs by a canonical serine protease mechanism, in which the side chain hydroxyl group of the serine supplies its oxygen atom to form the C-terminus of the beta chain, while the remainder of the serine residue undergoes an oxidative deamination to produce ammonia and the pyruvoyl prosthetic group on the alpha chain. During this reaction, the Ser that is part of the protease active site of the proenzyme becomes the pyruvoyl prosthetic group, which constitutes an essential element of the active site of the mature decarboxylase.

It is found in the cell membrane. The enzyme catalyses a 1,2-diacyl-sn-glycero-3-phospho-L-serine + H(+) = a 1,2-diacyl-sn-glycero-3-phosphoethanolamine + CO2. The protein operates within phospholipid metabolism; phosphatidylethanolamine biosynthesis; phosphatidylethanolamine from CDP-diacylglycerol: step 2/2. Catalyzes the formation of phosphatidylethanolamine (PtdEtn) from phosphatidylserine (PtdSer). This is Phosphatidylserine decarboxylase proenzyme from Clostridium botulinum (strain 657 / Type Ba4).